A 201-amino-acid chain; its full sequence is Large ribosomal subunit protein uL4 (201 aa).

A disordered region spans residues 39–72; it reads KRQGTSAQKSRSEVIGSGKKPWRQKGTGRARAGS.

Belongs to the universal ribosomal protein uL4 family. Part of the 50S ribosomal subunit.

Its function is as follows. One of the primary rRNA binding proteins, this protein initially binds near the 5'-end of the 23S rRNA. It is important during the early stages of 50S assembly. It makes multiple contacts with different domains of the 23S rRNA in the assembled 50S subunit and ribosome. In terms of biological role, forms part of the polypeptide exit tunnel. This Wigglesworthia glossinidia brevipalpis protein is Large ribosomal subunit protein uL4.